A 168-amino-acid polypeptide reads, in one-letter code: Small ribosomal subunit protein uS7c (168 aa).

This sequence belongs to the universal ribosomal protein uS7 family. In terms of assembly, part of the 30S ribosomal subunit.

It is found in the plastid. Its subcellular location is the chloroplast. One of the primary rRNA binding proteins, it binds directly to 16S rRNA where it nucleates assembly of the head domain of the 30S subunit. This is Small ribosomal subunit protein uS7c (rps7) from Chlamydomonas reinhardtii (Chlamydomonas smithii).